The primary structure comprises 158 residues: 6,7-dimethyl-8-ribityllumazine synthase (158 aa).

5-amino-6-(D-ribitylamino)uracil contacts are provided by residues Phe-22, Ala-57 to Glu-59, and Ala-81 to Ile-83. Gly-86 to Thr-87 is a (2S)-2-hydroxy-3-oxobutyl phosphate binding site. The active-site Proton donor is the His-89. Phe-114 provides a ligand contact to 5-amino-6-(D-ribitylamino)uracil. Arg-128 contacts (2S)-2-hydroxy-3-oxobutyl phosphate.

The protein belongs to the DMRL synthase family. Forms an icosahedral capsid composed of 60 subunits, arranged as a dodecamer of pentamers.

It catalyses the reaction (2S)-2-hydroxy-3-oxobutyl phosphate + 5-amino-6-(D-ribitylamino)uracil = 6,7-dimethyl-8-(1-D-ribityl)lumazine + phosphate + 2 H2O + H(+). Its pathway is cofactor biosynthesis; riboflavin biosynthesis; riboflavin from 2-hydroxy-3-oxobutyl phosphate and 5-amino-6-(D-ribitylamino)uracil: step 1/2. Catalyzes the formation of 6,7-dimethyl-8-ribityllumazine by condensation of 5-amino-6-(D-ribitylamino)uracil with 3,4-dihydroxy-2-butanone 4-phosphate. This is the penultimate step in the biosynthesis of riboflavin. In Shewanella pealeana (strain ATCC 700345 / ANG-SQ1), this protein is 6,7-dimethyl-8-ribityllumazine synthase.